Here is a 475-residue protein sequence, read N- to C-terminus: Bifunctional protein HldE (475 aa).

The interval Met1 to Thr318 is ribokinase. Asn195 to Glu198 provides a ligand contact to ATP. The active site involves Asp264. Positions Met344–Arg475 are cytidylyltransferase.

The protein in the N-terminal section; belongs to the carbohydrate kinase PfkB family. This sequence in the C-terminal section; belongs to the cytidylyltransferase family. In terms of assembly, homodimer.

The enzyme catalyses D-glycero-beta-D-manno-heptose 7-phosphate + ATP = D-glycero-beta-D-manno-heptose 1,7-bisphosphate + ADP + H(+). It carries out the reaction D-glycero-beta-D-manno-heptose 1-phosphate + ATP + H(+) = ADP-D-glycero-beta-D-manno-heptose + diphosphate. Its pathway is nucleotide-sugar biosynthesis; ADP-L-glycero-beta-D-manno-heptose biosynthesis; ADP-L-glycero-beta-D-manno-heptose from D-glycero-beta-D-manno-heptose 7-phosphate: step 1/4. The protein operates within nucleotide-sugar biosynthesis; ADP-L-glycero-beta-D-manno-heptose biosynthesis; ADP-L-glycero-beta-D-manno-heptose from D-glycero-beta-D-manno-heptose 7-phosphate: step 3/4. It functions in the pathway bacterial outer membrane biogenesis; LOS core biosynthesis. Functionally, catalyzes the phosphorylation of D-glycero-D-manno-heptose 7-phosphate at the C-1 position to selectively form D-glycero-beta-D-manno-heptose-1,7-bisphosphate. Its function is as follows. Catalyzes the ADP transfer from ATP to D-glycero-beta-D-manno-heptose 1-phosphate, yielding ADP-D-glycero-beta-D-manno-heptose. The polypeptide is Bifunctional protein HldE (Haemophilus ducreyi (strain 35000HP / ATCC 700724)).